The primary structure comprises 387 residues: tRNA pseudouridine synthase B (387 aa).

Aspartate 43 acts as the Nucleophile in catalysis.

The protein belongs to the pseudouridine synthase TruB family. Type 1 subfamily.

It carries out the reaction uridine(55) in tRNA = pseudouridine(55) in tRNA. In terms of biological role, responsible for synthesis of pseudouridine from uracil-55 in the psi GC loop of transfer RNAs. This Bifidobacterium longum subsp. infantis (strain ATCC 15697 / DSM 20088 / JCM 1222 / NCTC 11817 / S12) protein is tRNA pseudouridine synthase B.